Here is a 333-residue protein sequence, read N- to C-terminus: 5-formaminoimidazole-4-carboxamide-1-(beta)-D-ribofuranosyl 5'-monophosphate synthetase (333 aa).

2 residues coordinate 5-amino-1-(5-phospho-beta-D-ribosyl)imidazole-4-carboxamide: His10 and Ser70. In terms of domain architecture, ATP-grasp spans 91 to 324 (KEVLKWESDR…IAREIKIAIE (234 aa)). Residues 121-181 (PDDI…VPIY) and Glu203 each bind ATP. Asn231 is a binding site for 5-amino-1-(5-phospho-beta-D-ribosyl)imidazole-4-carboxamide. Residues Glu269 and Glu282 each contribute to the Mg(2+) site.

It belongs to the phosphohexose mutase family. Mg(2+) is required as a cofactor. Requires Mn(2+) as cofactor.

It catalyses the reaction 5-amino-1-(5-phospho-beta-D-ribosyl)imidazole-4-carboxamide + formate + ATP = 5-formamido-1-(5-phospho-D-ribosyl)imidazole-4-carboxamide + ADP + phosphate. It functions in the pathway purine metabolism; IMP biosynthesis via de novo pathway; 5-formamido-1-(5-phospho-D-ribosyl)imidazole-4-carboxamide from 5-amino-1-(5-phospho-D-ribosyl)imidazole-4-carboxamide (formate route): step 1/1. In terms of biological role, catalyzes the ATP- and formate-dependent formylation of 5-aminoimidazole-4-carboxamide-1-beta-d-ribofuranosyl 5'-monophosphate (AICAR) to 5-formaminoimidazole-4-carboxamide-1-beta-d-ribofuranosyl 5'-monophosphate (FAICAR) in the absence of folates. The chain is 5-formaminoimidazole-4-carboxamide-1-(beta)-D-ribofuranosyl 5'-monophosphate synthetase from Pyrococcus horikoshii (strain ATCC 700860 / DSM 12428 / JCM 9974 / NBRC 100139 / OT-3).